A 309-amino-acid chain; its full sequence is 4-hydroxy-3-methylbut-2-enyl diphosphate reductase (309 aa).

Residue C13 coordinates [4Fe-4S] cluster. (2E)-4-hydroxy-3-methylbut-2-enyl diphosphate contacts are provided by H42 and H75. Dimethylallyl diphosphate-binding residues include H42 and H75. Isopentenyl diphosphate is bound by residues H42 and H75. A [4Fe-4S] cluster-binding site is contributed by C97. H125 serves as a coordination point for (2E)-4-hydroxy-3-methylbut-2-enyl diphosphate. Residue H125 participates in dimethylallyl diphosphate binding. Position 125 (H125) interacts with isopentenyl diphosphate. E127 serves as the catalytic Proton donor. T165 serves as a coordination point for (2E)-4-hydroxy-3-methylbut-2-enyl diphosphate. C195 contributes to the [4Fe-4S] cluster binding site. 4 residues coordinate (2E)-4-hydroxy-3-methylbut-2-enyl diphosphate: S223, S224, N225, and S267. S223, S224, N225, and S267 together coordinate dimethylallyl diphosphate. Isopentenyl diphosphate-binding residues include S223, S224, N225, and S267.

Belongs to the IspH family. Requires [4Fe-4S] cluster as cofactor.

The catalysed reaction is isopentenyl diphosphate + 2 oxidized [2Fe-2S]-[ferredoxin] + H2O = (2E)-4-hydroxy-3-methylbut-2-enyl diphosphate + 2 reduced [2Fe-2S]-[ferredoxin] + 2 H(+). It catalyses the reaction dimethylallyl diphosphate + 2 oxidized [2Fe-2S]-[ferredoxin] + H2O = (2E)-4-hydroxy-3-methylbut-2-enyl diphosphate + 2 reduced [2Fe-2S]-[ferredoxin] + 2 H(+). The protein operates within isoprenoid biosynthesis; dimethylallyl diphosphate biosynthesis; dimethylallyl diphosphate from (2E)-4-hydroxy-3-methylbutenyl diphosphate: step 1/1. Its pathway is isoprenoid biosynthesis; isopentenyl diphosphate biosynthesis via DXP pathway; isopentenyl diphosphate from 1-deoxy-D-xylulose 5-phosphate: step 6/6. Functionally, catalyzes the conversion of 1-hydroxy-2-methyl-2-(E)-butenyl 4-diphosphate (HMBPP) into a mixture of isopentenyl diphosphate (IPP) and dimethylallyl diphosphate (DMAPP). Acts in the terminal step of the DOXP/MEP pathway for isoprenoid precursor biosynthesis. In Chlamydia abortus (strain DSM 27085 / S26/3) (Chlamydophila abortus), this protein is 4-hydroxy-3-methylbut-2-enyl diphosphate reductase.